Here is a 152-residue protein sequence, read N- to C-terminus: Nucleoside diphosphate kinase (152 aa).

6 residues coordinate ATP: K10, F58, R86, T92, R103, and N113. H116 (pros-phosphohistidine intermediate) is an active-site residue.

It belongs to the NDK family. Requires Mg(2+) as cofactor.

The protein localises to the cytoplasm. It catalyses the reaction a 2'-deoxyribonucleoside 5'-diphosphate + ATP = a 2'-deoxyribonucleoside 5'-triphosphate + ADP. The enzyme catalyses a ribonucleoside 5'-diphosphate + ATP = a ribonucleoside 5'-triphosphate + ADP. Its function is as follows. Major role in the synthesis of nucleoside triphosphates other than ATP. The ATP gamma phosphate is transferred to the NDP beta phosphate via a ping-pong mechanism, using a phosphorylated active-site intermediate. The protein is Nucleoside diphosphate kinase of Methanosphaera stadtmanae (strain ATCC 43021 / DSM 3091 / JCM 11832 / MCB-3).